Reading from the N-terminus, the 636-residue chain is PTS system beta-glucoside-specific EIIBCA component (636 aa).

The 86-residue stretch at 1 to 86 (MKYEQLAKDI…VEIGGFQNQA (86 aa)) folds into the PTS EIIB type-1 domain. The active-site Phosphocysteine intermediate; for EIIB activity is cysteine 26. 10 consecutive transmembrane segments (helical) span residues 104–124 (IDIIASIFTPVLGVLAATGMI), 146–166 (LLHAIGDSLFYFFPIFLGYTA), 172–192 (ATPFIGMAIGASLVYPTLVVL), 215–235 (FLGIPVILMSYATSVIPIILA), 258–278 (LVPFFTLLIVVPLTFIVIGPI), 299–319 (IIAGAFLGGFWQVFVIFGLHW), 337–357 (VLAMVFAASFAQIGAVAAVWL), 369–389 (VPAFISGIFGVTEPAIYGVTL), 407–427 (AIIGLFRSQGYIIGGLGIFGI), and 444–464 (IVIAVVVAFVLGFILTYLFGL). One can recognise a PTS EIIC type-1 domain in the interval 105-476 (DIIASIFTPV…GNASDEQTET (372 aa)). The segment at 472-492 (EQTETKAHTSTGTGEKEEISS) is disordered. The PTS EIIA type-1 domain occupies 506-610 (DEAFSSGALG…AVTTPVIVTN (105 aa)). Catalysis depends on histidine 558, which acts as the Tele-phosphohistidine intermediate; for EIIA activity.

The protein localises to the cell membrane. The phosphoenolpyruvate-dependent sugar phosphotransferase system (sugar PTS), a major carbohydrate active -transport system, catalyzes the phosphorylation of incoming sugar substrates concomitantly with their translocation across the cell membrane. This system is involved in beta-glucoside transport. The sequence is that of PTS system beta-glucoside-specific EIIBCA component (bglP) from Halalkalibacterium halodurans (strain ATCC BAA-125 / DSM 18197 / FERM 7344 / JCM 9153 / C-125) (Bacillus halodurans).